A 195-amino-acid chain; its full sequence is Inhibitor of glycogen debranching 1 (195 aa).

A compositionally biased stretch (polar residues) spans 1–18 (MTDPHLNTPQVSTSPTFE). Residues 1-101 (MTDPHLNTPQ…ERRSSGPMDF (101 aa)) form a disordered region. Residue S64 is modified to Phosphoserine. T65 bears the Phosphothreonine mark. Over residues 75–95 (EQARERESSIGEHAPGAERRS) the composition is skewed to basic and acidic residues. Phosphoserine is present on residues S95 and S96. At T132 the chain carries Phosphothreonine. Residues 146-175 (NSYLDNNSNGNSARVPHGSPPQLGTRRKSS) form a disordered region. Positions 148–157 (YLDNNSNGNS) are enriched in polar residues. S164 is modified (phosphoserine).

Interacts with GDB1.

It is found in the cytoplasm. Acts as an inhibitor of GDB1, enhancing the ability of cells to store glucose as glycogen. The sequence is that of Inhibitor of glycogen debranching 1 (IGD1) from Saccharomyces cerevisiae (strain ATCC 204508 / S288c) (Baker's yeast).